The primary structure comprises 67 residues: Peptide Ctry2606 (67 aa).

An N-terminal signal peptide occupies residues 1–23 (MKTQTALFSFFLVLLLVATQTEG). The residue at position 33 (Leu33) is a Leucine amide. Residues 37 to 67 (ALRNQNFVDYAFDPSLSAADWRALETLLEEY) constitute a propeptide that is removed on maturation.

This sequence belongs to the non-disulfide-bridged peptide (NDBP) superfamily. Short antimicrobial peptide (group 4) family. As to expression, expressed by the venom gland.

It localises to the secreted. Its function is as follows. Antimicrobial peptide. The sequence is that of Peptide Ctry2606 from Chaerilus tryznai (Scorpion).